The following is a 755-amino-acid chain: Putative two-component response regulator-like APRR6 (755 aa).

One can recognise a Response regulatory domain in the interval 14-128; it reads SILLIDHDTA…DIKNMWQHVF (115 aa).

Belongs to the ARR-like family.

It localises to the nucleus. In Arabidopsis thaliana (Mouse-ear cress), this protein is Putative two-component response regulator-like APRR6 (APRR6).